Here is a 149-residue protein sequence, read N- to C-terminus: Transcriptional repressor NrdR (149 aa).

Residues 3-34 (CPFCSATDTKVIDSRLVADGHQVRRRRECTEC) fold into a zinc finger. The ATP-cone domain occupies 49–139 (PRVIKRDGTR…VYRAFEDVSQ (91 aa)).

It belongs to the NrdR family. It depends on Zn(2+) as a cofactor.

In terms of biological role, negatively regulates transcription of bacterial ribonucleotide reductase nrd genes and operons by binding to NrdR-boxes. The chain is Transcriptional repressor NrdR from Shewanella frigidimarina (strain NCIMB 400).